A 432-amino-acid chain; its full sequence is Adenylosuccinate synthetase (432 aa).

Residues 13–19 (GDEGKGK) and 41–43 (GHT) contribute to the GTP site. Aspartate 14 serves as the catalytic Proton acceptor. Residues aspartate 14 and glycine 41 each contribute to the Mg(2+) site. IMP contacts are provided by residues 14 to 17 (DEGK), 39 to 42 (NAGH), threonine 130, arginine 144, glutamine 225, threonine 240, and arginine 304. The active-site Proton donor is the histidine 42. 300–306 (ATTGRRR) lines the substrate pocket. GTP contacts are provided by residues arginine 306, 332–334 (KLD), and 415–417 (STG).

This sequence belongs to the adenylosuccinate synthetase family. Homodimer. Mg(2+) is required as a cofactor.

The protein resides in the cytoplasm. It catalyses the reaction IMP + L-aspartate + GTP = N(6)-(1,2-dicarboxyethyl)-AMP + GDP + phosphate + 2 H(+). Its pathway is purine metabolism; AMP biosynthesis via de novo pathway; AMP from IMP: step 1/2. Functionally, plays an important role in the de novo pathway of purine nucleotide biosynthesis. Catalyzes the first committed step in the biosynthesis of AMP from IMP. The protein is Adenylosuccinate synthetase of Salmonella choleraesuis (strain SC-B67).